Consider the following 452-residue polypeptide: Cell division protein FtsZ (452 aa).

GTP-binding positions include 24 to 28 (GAGSN), 111 to 113 (GTG), E142, R146, and D190.

Belongs to the FtsZ family. Homodimer. Polymerizes to form a dynamic ring structure in a strictly GTP-dependent manner. Interacts directly with several other division proteins.

It is found in the cytoplasm. Its function is as follows. Essential cell division protein that forms a contractile ring structure (Z ring) at the future cell division site. The regulation of the ring assembly controls the timing and the location of cell division. One of the functions of the FtsZ ring is to recruit other cell division proteins to the septum to produce a new cell wall between the dividing cells. Binds GTP and shows GTPase activity. The polypeptide is Cell division protein FtsZ (Rickettsia typhi (strain ATCC VR-144 / Wilmington)).